A 141-amino-acid chain; its full sequence is SsrA-binding protein (141 aa).

It belongs to the SmpB family.

It localises to the cytoplasm. Its function is as follows. Required for rescue of stalled ribosomes mediated by trans-translation. Binds to transfer-messenger RNA (tmRNA), required for stable association of tmRNA with ribosomes. tmRNA and SmpB together mimic tRNA shape, replacing the anticodon stem-loop with SmpB. tmRNA is encoded by the ssrA gene; the 2 termini fold to resemble tRNA(Ala) and it encodes a 'tag peptide', a short internal open reading frame. During trans-translation Ala-aminoacylated tmRNA acts like a tRNA, entering the A-site of stalled ribosomes, displacing the stalled mRNA. The ribosome then switches to translate the ORF on the tmRNA; the nascent peptide is terminated with the 'tag peptide' encoded by the tmRNA and targeted for degradation. The ribosome is freed to recommence translation, which seems to be the essential function of trans-translation. This is SsrA-binding protein from Ureaplasma parvum serovar 3 (strain ATCC 27815 / 27 / NCTC 11736).